The chain runs to 318 residues: Cis-3-alkyl-4-alkyloxetan-2-one decarboxylase (318 aa).

The AB hydrolase-1 domain occupies 30-275 (PVVMVHGNPS…ADCGHYILED (246 aa)).

It belongs to the AB hydrolase superfamily.

It carries out the reaction a cis-3-alkyl-4-alkyloxetan-2-one = a cis-alkene + CO2. In terms of biological role, involved in olefin biosynthesis. Catalyzes the elimination of carbon dioxide from beta-lactones to form the final olefin product. The S.oneidensis oleABCD genes produce 3,6,9,12,15,19,22,25,28-hentriacontanonaene, which may aid the cells in adapting to a sudden drop in temperature. The sequence is that of Cis-3-alkyl-4-alkyloxetan-2-one decarboxylase from Shewanella oneidensis (strain ATCC 700550 / JCM 31522 / CIP 106686 / LMG 19005 / NCIMB 14063 / MR-1).